The sequence spans 1358 residues: Phosphoribosylformylglycinamidine synthase (1358 aa).

Threonine 2 is modified (N-acetylthreonine). Positions 339–363 (AVSPFPGAATGSGGEIRDEGATGRG) are disordered. ATP-binding positions include 345–356 (GAATGSGGEIRD), 424–426 (NGY), and alanine 719. The Mg(2+) site is built by aspartate 720, glutamate 762, asparagine 766, and aspartate 930. Serine 932 is an ATP binding site. In terms of domain architecture, Glutamine amidotransferase type-1 spans 1093 to 1358 (VAILREQGVN…LFRSARRWVG (266 aa)). The active-site Nucleophile is the cysteine 1187. Residues histidine 1319 and glutamate 1321 contribute to the active site.

In the N-terminal section; belongs to the FGAMS family.

Its subcellular location is the cytoplasm. The catalysed reaction is N(2)-formyl-N(1)-(5-phospho-beta-D-ribosyl)glycinamide + L-glutamine + ATP + H2O = 2-formamido-N(1)-(5-O-phospho-beta-D-ribosyl)acetamidine + L-glutamate + ADP + phosphate + H(+). Its pathway is purine metabolism; IMP biosynthesis via de novo pathway; 5-amino-1-(5-phospho-D-ribosyl)imidazole from N(2)-formyl-N(1)-(5-phospho-D-ribosyl)glycinamide: step 1/2. Functionally, phosphoribosylformylglycinamidine synthase involved in the purines biosynthetic pathway. Catalyzes the ATP-dependent conversion of formylglycinamide ribonucleotide (FGAR) and glutamine to yield formylglycinamidine ribonucleotide (FGAM) and glutamate. This chain is Phosphoribosylformylglycinamidine synthase (ADE6), found in Saccharomyces cerevisiae (strain ATCC 204508 / S288c) (Baker's yeast).